The chain runs to 324 residues: Zinc transporter ZIP1 (324 aa).

Residues 1–30 lie on the Extracellular side of the membrane; it reads MGPWGEPELLVWRPEAVASEPSVPVGLEVK. Residues 31-51 form a helical membrane-spanning segment; that stretch reads LGALVLLLLLTLICSLVPVCV. Residues 52–68 lie on the Cytoplasmic side of the membrane; it reads LRRSGANHEASASGQKA. A helical membrane pass occupies residues 69 to 89; sequence LSLVSCFAGGVFLATCLLDLL. Topologically, residues 90-104 are extracellular; sequence PDYLAAIDEALEALH. A helical transmembrane segment spans residues 105 to 125; that stretch reads VTLQFPLQEFILAMGFFLVLV. The Cytoplasmic segment spans residues 126 to 179; it reads MEQITLAYKEQTSPPHPEETRALLGTVNGGPQHWHDGPGIPQAGGTPAAPSALR. The helical transmembrane segment at 180-200 threads the bilayer; that stretch reads ACVLVFSLALHSVFEGLAVGL. The Extracellular portion of the chain corresponds to 201 to 206; that stretch reads QRDRAR. The helical transmembrane segment at 207–227 threads the bilayer; that stretch reads AMELCLALLLHKGILAVSLSL. At 228–237 the chain is on the cytoplasmic side; sequence RLLQSHLRVQ. Residues 238–258 form a helical membrane-spanning segment; that stretch reads VVAGCGILFSCMTPLGIGLGA. At 259-272 the chain is on the extracellular side; sequence ALAESAGPLHQLAQ. The helical transmembrane segment at 273 to 293 threads the bilayer; the sequence is SVLEGMAAGTFLYITFLEILP. The Cytoplasmic portion of the chain corresponds to 294-303; the sequence is QELATSEQRI. Residues 304–324 form a helical membrane-spanning segment; the sequence is LKVILLLAGFALLTGLLFVQI.

The protein belongs to the ZIP transporter (TC 2.A.5) family. In terms of tissue distribution, ubiquitous, except in the pancreas. Highest levels seen in kidney, salivary gland and placenta.

The protein localises to the cell membrane. The protein resides in the endoplasmic reticulum membrane. The enzyme catalyses Zn(2+)(in) = Zn(2+)(out). In terms of biological role, transporter for the divalent cation Zn(2+). Mediates the influx of Zn(2+) into cells from extracellular space. The chain is Zinc transporter ZIP1 (Slc39a1) from Mus musculus (Mouse).